The chain runs to 447 residues: Protein chibby homolog 2 (447 aa).

8 positions are modified to phosphoserine: Ser41, Ser85, Ser88, Ser96, Ser123, Ser143, Ser147, and Ser149. A coiled-coil region spans residues 164 to 197; that stretch reads EYLLQEENKSLRDENRALRDENKALRKENKILQV. Disordered regions lie at residues 208–244 and 266–320; these read HEES…KENT and WAQA…EDSK. Phosphoserine occurs at positions 211 and 224. The segment covering 218 to 232 has biased composition (basic and acidic residues); the sequence is LHKDTTSQEVVKKDN. Positions 237–264 form a coiled coil; that stretch reads AQRSKENTLQFIREENRALQQLLEQRQA. Low complexity predominate over residues 266–276; that stretch reads WAQAEESATSA. 2 positions are modified to phosphoserine: Ser272 and Ser275. Residues 277 to 290 show a composition bias toward basic and acidic residues; the sequence is EEGKPTSSPKEEPH. Phosphoserine occurs at positions 333 and 336. Residues 354 to 412 adopt a coiled-coil conformation; that stretch reads LQLLREMNQALQALREENRLLQEENRALHAMREEHRVFQEENKALWENNKLKLQQRLVI.

Belongs to the chibby family. SPERT subfamily. In terms of assembly, homodimer. Binds to NEK1.

The protein is Protein chibby homolog 2 (Cby2) of Rattus norvegicus (Rat).